Here is a 328-residue protein sequence, read N- to C-terminus: LOB domain-containing protein 27 (328 aa).

In terms of domain architecture, LOB spans 35-136 (GACAACKYQR…EELKAVNSQL (102 aa)).

Belongs to the LOB domain-containing protein family.

The protein is LOB domain-containing protein 27 (LBD27) of Arabidopsis thaliana (Mouse-ear cress).